We begin with the raw amino-acid sequence, 445 residues long: Glycine--tRNA ligase (445 aa).

Positions 97 and 145 each coordinate substrate. ATP contacts are provided by residues 177–179 (RNE), 187–192 (FRTCEF), 262–263 (EV), and 308–311 (GLTR). Position 192–196 (192–196 (FEQME)) interacts with substrate. Position 304 to 308 (304 to 308 (ETSAG)) interacts with substrate.

This sequence belongs to the class-II aminoacyl-tRNA synthetase family. In terms of assembly, homodimer.

The protein localises to the cytoplasm. It carries out the reaction tRNA(Gly) + glycine + ATP = glycyl-tRNA(Gly) + AMP + diphosphate. In terms of biological role, catalyzes the attachment of glycine to tRNA(Gly). The sequence is that of Glycine--tRNA ligase from Borreliella burgdorferi (strain ATCC 35210 / DSM 4680 / CIP 102532 / B31) (Borrelia burgdorferi).